We begin with the raw amino-acid sequence, 462 residues long: ATP synthase subunit beta (462 aa).

151–158 (GGAGVGKT) contacts ATP.

It belongs to the ATPase alpha/beta chains family. F-type ATPases have 2 components, CF(1) - the catalytic core - and CF(0) - the membrane proton channel. CF(1) has five subunits: alpha(3), beta(3), gamma(1), delta(1), epsilon(1). CF(0) has four main subunits: a(1), b(1), b'(1) and c(9-12).

The protein localises to the cell inner membrane. It carries out the reaction ATP + H2O + 4 H(+)(in) = ADP + phosphate + 5 H(+)(out). Functionally, produces ATP from ADP in the presence of a proton gradient across the membrane. The catalytic sites are hosted primarily by the beta subunits. This Pelodictyon phaeoclathratiforme (strain DSM 5477 / BU-1) protein is ATP synthase subunit beta.